A 269-amino-acid polypeptide reads, in one-letter code: Integral membrane protein 2C (269 aa).

Residue threonine 39 is modified to Phosphothreonine. The chain crosses the membrane as a helical; Signal-anchor for type II membrane protein span at residues 57-77 (VGGVCYLSMGMVVLLMGLVFA). The BRICHOS domain occupies 138-232 (FGGGDPADII…LCNGKDTYRL (95 aa)). A disulfide bridge links cysteine 165 with cysteine 224. Asparagine 171 is a glycosylation site (N-linked (GlcNAc...) asparagine).

Belongs to the ITM2 family. In terms of assembly, interacts with BACE1. Interacts with APP. Interacts with STMN2. Type I membrane-bound, as well as soluble, furin has a pre-eminent role in ITM2C proteolytic processing. PCSK7 and PCSK5 may also be involved although to a lesser extent. The soluble form of PCSK7 is incapable of processing ITM2C. Fails to undergo shedding by ADAM10 and intramembrane cleavage by SPPL2B.

Its subcellular location is the lysosome membrane. It is found in the cell membrane. Its function is as follows. Negative regulator of amyloid-beta peptide production. May inhibit the processing of APP by blocking its access to alpha- and beta-secretase. Binding to the beta-secretase-cleaved APP C-terminal fragment is negligible, suggesting that ITM2C is a poor gamma-secretase cleavage inhibitor. May play a role in TNF-induced cell death and neuronal differentiation. This Rattus norvegicus (Rat) protein is Integral membrane protein 2C (Itm2c).